The chain runs to 292 residues: Bifunctional protein FolD 2 (292 aa).

Residues 166-168 (GHS) and Ile232 each bind NADP(+).

The protein belongs to the tetrahydrofolate dehydrogenase/cyclohydrolase family. As to quaternary structure, homodimer.

It carries out the reaction (6R)-5,10-methylene-5,6,7,8-tetrahydrofolate + NADP(+) = (6R)-5,10-methenyltetrahydrofolate + NADPH. The enzyme catalyses (6R)-5,10-methenyltetrahydrofolate + H2O = (6R)-10-formyltetrahydrofolate + H(+). It functions in the pathway one-carbon metabolism; tetrahydrofolate interconversion. In terms of biological role, catalyzes the oxidation of 5,10-methylenetetrahydrofolate to 5,10-methenyltetrahydrofolate and then the hydrolysis of 5,10-methenyltetrahydrofolate to 10-formyltetrahydrofolate. This Ruegeria pomeroyi (strain ATCC 700808 / DSM 15171 / DSS-3) (Silicibacter pomeroyi) protein is Bifunctional protein FolD 2.